A 233-amino-acid polypeptide reads, in one-letter code: Large ribosomal subunit protein uL1 (233 aa).

The protein belongs to the universal ribosomal protein uL1 family. As to quaternary structure, part of the 50S ribosomal subunit.

In terms of biological role, binds directly to 23S rRNA. The L1 stalk is quite mobile in the ribosome, and is involved in E site tRNA release. Functionally, protein L1 is also a translational repressor protein, it controls the translation of the L11 operon by binding to its mRNA. The polypeptide is Large ribosomal subunit protein uL1 (Shewanella putrefaciens (strain CN-32 / ATCC BAA-453)).